The chain runs to 117 residues: Large ribosomal subunit protein bL20 (117 aa).

The protein belongs to the bacterial ribosomal protein bL20 family.

Binds directly to 23S ribosomal RNA and is necessary for the in vitro assembly process of the 50S ribosomal subunit. It is not involved in the protein synthesizing functions of that subunit. In Limosilactobacillus fermentum (strain NBRC 3956 / LMG 18251) (Lactobacillus fermentum), this protein is Large ribosomal subunit protein bL20.